We begin with the raw amino-acid sequence, 65 residues long: Orally active insecticidal peptide-3 (65 aa).

Positions 1–21 (MKTSVLFAILGLALLFCLSFG) are cleaved as a signal peptide. The propeptide occupies 22–29 (VELEETGR). Cystine bridges form between Cys31–Cys46, Cys38–Cys51, and Cys45–Cys58. Residue Pro62 is modified to Proline amide.

The protein belongs to the neurotoxin 10 (Hwtx-1) family. 46 (Jztx-7/10/12) subfamily. In terms of tissue distribution, expressed by the venom gland.

It is found in the secreted. In terms of biological role, probable ion channel inhibitor. Shows insecticidal activity when injected into mealworms. The protein is Orally active insecticidal peptide-3 of Selenotypus plumipes (Australian featherleg tarantula).